A 383-amino-acid polypeptide reads, in one-letter code: Protein phosphatase 2C homolog 4 (383 aa).

A PPM-type phosphatase domain is found at 51–356; it reads SLGLCTARGD…DDITCLVVRL (306 aa). Residues Asp-92, Asp-308, and Asp-347 each coordinate Mn(2+).

Belongs to the PP2C family. Monomer. Mg(2+) is required as a cofactor. Mn(2+) serves as cofactor.

The protein localises to the vacuole membrane. It carries out the reaction O-phospho-L-seryl-[protein] + H2O = L-seryl-[protein] + phosphate. It catalyses the reaction O-phospho-L-threonyl-[protein] + H2O = L-threonyl-[protein] + phosphate. Has a role in the regulation of vacuole fusion. This chain is Protein phosphatase 2C homolog 4 (ptc4), found in Schizosaccharomyces pombe (strain 972 / ATCC 24843) (Fission yeast).